The following is a 288-amino-acid chain: Acetyl-coenzyme A carboxylase carboxyl transferase subunit beta (288 aa).

Residues 32–288 enclose the CoA carboxyltransferase N-terminal domain; sequence LFAKCPACKH…LELHTEVENV (257 aa). Zn(2+)-binding residues include Cys-36, Cys-39, Cys-54, and Cys-57. The segment at 36–57 adopts a C4-type zinc-finger fold; that stretch reads CPACKHTIYQKDLGKNKVCPNC.

Belongs to the AccD/PCCB family. Acetyl-CoA carboxylase is a heterohexamer composed of biotin carboxyl carrier protein (AccB), biotin carboxylase (AccC) and two subunits each of ACCase subunit alpha (AccA) and ACCase subunit beta (AccD). Zn(2+) serves as cofactor.

The protein resides in the cytoplasm. The enzyme catalyses N(6)-carboxybiotinyl-L-lysyl-[protein] + acetyl-CoA = N(6)-biotinyl-L-lysyl-[protein] + malonyl-CoA. It functions in the pathway lipid metabolism; malonyl-CoA biosynthesis; malonyl-CoA from acetyl-CoA: step 1/1. Functionally, component of the acetyl coenzyme A carboxylase (ACC) complex. Biotin carboxylase (BC) catalyzes the carboxylation of biotin on its carrier protein (BCCP) and then the CO(2) group is transferred by the transcarboxylase to acetyl-CoA to form malonyl-CoA. This is Acetyl-coenzyme A carboxylase carboxyl transferase subunit beta from Lactococcus lactis subsp. cremoris (strain SK11).